A 424-amino-acid chain; its full sequence is UPF0229 protein Sde_0732 (424 aa).

The segment at 52–109 (IGIPSKDISEPVFHHDSGGVDTRVLPGNDQFHSGDRIQRPPSGQGGGGSGKGASDSGE) is disordered. A compositionally biased stretch (basic and acidic residues) spans 58–69 (DISEPVFHHDSG).

This sequence belongs to the UPF0229 family.

The polypeptide is UPF0229 protein Sde_0732 (Saccharophagus degradans (strain 2-40 / ATCC 43961 / DSM 17024)).